We begin with the raw amino-acid sequence, 448 residues long: Portal protein (448 aa).

Residues 1 to 25 (MAKRGRKPKELVPGPGSIDPSDVPK) are disordered.

Belongs to the P23virus portal protein family. Homododecamer. Interacts with the capsid protein. Interacts with the terminase large subunit; this interaction allows the packaging of viral DNA.

Its subcellular location is the virion. In terms of biological role, forms the portal vertex of the capsid. This portal plays critical roles in head assembly, genome packaging, neck/tail attachment, and genome ejection. The portal protein multimerizes as a single ring-shaped homododecamer arranged around a central channel. Forms the portal vertex of the capsid. This portal plays critical roles in head assembly, genome packaging, neck/tail attachment, and genome ejection. This chain is Portal protein, found in Thermus thermophilus (Thermus thermophilus phage P23-45).